Reading from the N-terminus, the 214-residue chain is Large ribosomal subunit protein uL3 (214 aa).

The disordered stretch occupies residues 136 to 156 (THGNSLSHRAPGSIGQNQTPG). At Gln153 the chain carries N5-methylglutamine.

The protein belongs to the universal ribosomal protein uL3 family. As to quaternary structure, part of the 50S ribosomal subunit. Forms a cluster with proteins L14 and L19. In terms of processing, methylated by PrmB.

In terms of biological role, one of the primary rRNA binding proteins, it binds directly near the 3'-end of the 23S rRNA, where it nucleates assembly of the 50S subunit. This is Large ribosomal subunit protein uL3 from Thioalkalivibrio sulfidiphilus (strain HL-EbGR7).